The sequence spans 682 residues: Methionine--tRNA ligase (682 aa).

Residues 14-24 (PYANGPVHLGH) carry the 'HIGH' region motif. The Zn(2+) site is built by cysteine 145, cysteine 148, cysteine 158, and cysteine 161. A 'KMSKS' region motif is present at residues 331–335 (KMSKS). Lysine 334 is an ATP binding site. The tRNA-binding domain maps to 580–682 (AFAAVDLRVA…SGAKPGQRIK (103 aa)).

The protein belongs to the class-I aminoacyl-tRNA synthetase family. MetG type 1 subfamily. As to quaternary structure, homodimer. The cofactor is Zn(2+).

The protein resides in the cytoplasm. The enzyme catalyses tRNA(Met) + L-methionine + ATP = L-methionyl-tRNA(Met) + AMP + diphosphate. Its function is as follows. Is required not only for elongation of protein synthesis but also for the initiation of all mRNA translation through initiator tRNA(fMet) aminoacylation. In Pseudomonas syringae pv. tomato (strain ATCC BAA-871 / DC3000), this protein is Methionine--tRNA ligase.